A 320-amino-acid polypeptide reads, in one-letter code: BTB and MATH domain-containing protein 36 (320 aa).

The region spanning 7 to 136 is the MATH domain; the sequence is KGSIRFEIQN…DKHAVLEVQI (130 aa). The 68-residue stretch at 160–227 folds into the BTB domain; the sequence is TDVVLVLEGK…IYPTHMLINS (68 aa).

The chain is BTB and MATH domain-containing protein 36 (bath-36) from Caenorhabditis elegans.